A 209-amino-acid chain; its full sequence is Octanoyltransferase (209 aa).

Residues 30-209 form the BPL/LPL catalytic domain; the sequence is DNEPEIVYLV…IQTEFNKIFK (180 aa). Residues 69 to 76, 143 to 145, and 156 to 158 contribute to the substrate site; these read RGGKFTFH, AIG, and GVA. Cys174 (acyl-thioester intermediate) is an active-site residue.

The protein belongs to the LipB family.

Its subcellular location is the cytoplasm. The catalysed reaction is octanoyl-[ACP] + L-lysyl-[protein] = N(6)-octanoyl-L-lysyl-[protein] + holo-[ACP] + H(+). It functions in the pathway protein modification; protein lipoylation via endogenous pathway; protein N(6)-(lipoyl)lysine from octanoyl-[acyl-carrier-protein]: step 1/2. Its function is as follows. Catalyzes the transfer of endogenously produced octanoic acid from octanoyl-acyl-carrier-protein onto the lipoyl domains of lipoate-dependent enzymes. Lipoyl-ACP can also act as a substrate although octanoyl-ACP is likely to be the physiological substrate. The sequence is that of Octanoyltransferase from Rickettsia felis (strain ATCC VR-1525 / URRWXCal2) (Rickettsia azadi).